Here is a 442-residue protein sequence, read N- to C-terminus: Syndecan-3 (442 aa).

Disordered stretches follow at residues 1-25 and 47-80; these read MKPG…APGA and RWRN…YSGS. The N-terminal stretch at 1-44 is a signal peptide; it reads MKPGPPRRGTAQGQRVDTATHAPGARGLLLPPLLLLLLAGRAAG. The Extracellular portion of the chain corresponds to 45–387; the sequence is AQRWRNENFE…SILERKEVLV (343 aa). The span at 48–58 shows a compositional bias: basic and acidic residues; sequence WRNENFERPVD. Residues 61 to 75 show a composition bias toward acidic residues; the sequence is GSGDDDSFPDDELDD. Ser78, Ser80, Ser82, and Ser89 each carry an O-linked (Xyl...) (glycosaminoglycan) serine glycan. Residue Thr107 is glycosylated (O-linked (GalNAc) threonine; by GALNT13). Disordered stretches follow at residues 152–199, 253–293, and 305–327; these read ESSQ…PATA, ATSR…AQTP, and EPEV…TTQP. Composition is skewed to low complexity over residues 157–199 and 276–287; these read ATTI…PATA and TLPLGTTAPGPT. Ser161 carries O-linked (GalNAc) serine; by GALNT13 glycosylation. Residues Thr162, Thr163, Thr170, and Thr172 are each glycosylated (O-linked (GalNAc) threonine; by GALNT13). 2 O-linked (Xyl...) (glycosaminoglycan) serine glycosylation sites follow: Ser315 and Ser367. Residues 388-408 form a helical membrane-spanning segment; that stretch reads AVIVGGVVGALFAAFLVTLLI. Tyr409, Tyr419, Tyr431, and Tyr441 each carry phosphotyrosine. The Cytoplasmic portion of the chain corresponds to 409–442; that stretch reads YRMKKKDEGSYTLEEPKQASVTYQKPDKQEEFYA. The interval 419 to 442 is disordered; sequence YTLEEPKQASVTYQKPDKQEEFYA. Residues 433–442 show a composition bias toward basic and acidic residues; the sequence is KPDKQEEFYA.

It belongs to the syndecan proteoglycan family. In terms of assembly, interacts with TIAM1. Interacts with PTN (via heparan sulfate chains); this interaction mediates the neurite outgrowth-promoting signal from PTN to the cytoskeleton of growing neurites; this interaction mediates osteoblast recruitment. Interacts with MDK; this interaction induces SDC3 clustering; this interaction induces neuronal cell adhesion and neurite outgrowth. O-glycosylated within the Thr/Ser-rich region which could interact with lectin domains on other molecules.

The protein resides in the cell membrane. Functionally, cell surface proteoglycan that may bear heparan sulfate. May have a role in the organization of cell shape by affecting the actin cytoskeleton, possibly by transferring signals from the cell surface in a sugar-dependent mechanism. The polypeptide is Syndecan-3 (Sdc3) (Mus musculus (Mouse)).